Here is a 148-residue protein sequence, read N- to C-terminus: Hemoglobin subunit beta-4 (148 aa).

Residues 3-148 form the Globin domain; that stretch reads DWTDPERSAI…VVSALGRQYH (146 aa). Positions 64 and 93 each coordinate heme b.

The protein belongs to the globin family. In terms of assembly, heterotetramer of two alpha chains and two beta chains. Red blood cells.

Involved in oxygen transport from gills to the various peripheral tissues. The sequence is that of Hemoglobin subunit beta-4 (hbb4) from Oncorhynchus mykiss (Rainbow trout).